The sequence spans 335 residues: MTWFTPDVIDAIIAVVKAIVVLLAVVVCGALLSFVERRLLGWWQDRYGPNRVGPFGMFQIAADMLKMFFKEDWTPPFADKVIFTLAPVVAMSALLIAFAVIPITPTWGVADLNIGLLFFFAMAGLSVYAVLFAGWSSNNKFALLGSLRASAQTVSYEVFMGLALMGIVVQVGSFNMRDIVEYQAQNLWFIIPQFFGFCTFFIAGVAVTHRHPFDQPEAEQELADGYHIEYAGMKWGMFFVGEYIGIILISALLVTLFFGGWHGPFDILPSLAFFWFALKTAFFIMLFILLRASIPRPRYDQVMDFSWKFCLPLTLINLLVTAAIVLLNTPAGSVQ.

8 consecutive transmembrane segments (helical) span residues 12 to 32 (IIAV…GALL), 81 to 101 (VIFT…FAVI), 114 to 134 (IGLL…LFAG), 154 to 174 (VSYE…VGSF), 187 to 207 (LWFI…GVAV), 238 to 258 (FFVG…TLFF), 270 to 290 (SLAF…FILL), and 307 to 327 (WKFC…IVLL).

It belongs to the complex I subunit 1 family. As to quaternary structure, NDH-1 is composed of 13 different subunits. Subunits NuoA, H, J, K, L, M, N constitute the membrane sector of the complex.

It localises to the cell inner membrane. The catalysed reaction is a quinone + NADH + 5 H(+)(in) = a quinol + NAD(+) + 4 H(+)(out). In terms of biological role, NDH-1 shuttles electrons from NADH, via FMN and iron-sulfur (Fe-S) centers, to quinones in the respiratory chain. The immediate electron acceptor for the enzyme in this species is believed to be ubiquinone. Couples the redox reaction to proton translocation (for every two electrons transferred, four hydrogen ions are translocated across the cytoplasmic membrane), and thus conserves the redox energy in a proton gradient. This subunit may bind ubiquinone. The polypeptide is NADH-quinone oxidoreductase subunit H (Pseudomonas syringae pv. tomato (strain ATCC BAA-871 / DC3000)).